Consider the following 283-residue polypeptide: Thymidylate synthase (283 aa).

R22 lines the dUMP pocket. C160 functions as the Nucleophile in the catalytic mechanism. DUMP is bound by residues 180–183 (RSCD), N191, and 221–223 (HIY). D183 provides a ligand contact to (6R)-5,10-methylene-5,6,7,8-tetrahydrofolate. S282 is a (6R)-5,10-methylene-5,6,7,8-tetrahydrofolate binding site.

This sequence belongs to the thymidylate synthase family. Bacterial-type ThyA subfamily. In terms of assembly, homodimer.

It localises to the cytoplasm. The catalysed reaction is dUMP + (6R)-5,10-methylene-5,6,7,8-tetrahydrofolate = 7,8-dihydrofolate + dTMP. It participates in pyrimidine metabolism; dTTP biosynthesis. In terms of biological role, catalyzes the reductive methylation of 2'-deoxyuridine-5'-monophosphate (dUMP) to 2'-deoxythymidine-5'-monophosphate (dTMP) while utilizing 5,10-methylenetetrahydrofolate (mTHF) as the methyl donor and reductant in the reaction, yielding dihydrofolate (DHF) as a by-product. This enzymatic reaction provides an intracellular de novo source of dTMP, an essential precursor for DNA biosynthesis. This is Thymidylate synthase from Vibrio atlanticus (strain LGP32) (Vibrio splendidus (strain Mel32)).